We begin with the raw amino-acid sequence, 380 residues long: Glucose-1-phosphate adenylyltransferase (380 aa).

Alpha-D-glucose 1-phosphate contacts are provided by residues G164, 179–180 (EK), and S190.

Belongs to the bacterial/plant glucose-1-phosphate adenylyltransferase family. Homotetramer.

It catalyses the reaction alpha-D-glucose 1-phosphate + ATP + H(+) = ADP-alpha-D-glucose + diphosphate. It participates in glycan biosynthesis; glycogen biosynthesis. Functionally, involved in the biosynthesis of ADP-glucose, a building block required for the elongation reactions to produce glycogen. Catalyzes the reaction between ATP and alpha-D-glucose 1-phosphate (G1P) to produce pyrophosphate and ADP-Glc. The chain is Glucose-1-phosphate adenylyltransferase from Streptococcus gordonii (strain Challis / ATCC 35105 / BCRC 15272 / CH1 / DL1 / V288).